A 1824-amino-acid polypeptide reads, in one-letter code: Afadin (1824 aa).

Residues 39 to 133 form the Ras-associating 1 domain; that stretch reads FHGVMRFYFQ…GRFVLKNEND (95 aa). The disordered stretch occupies residues 128 to 194; the sequence is LKNENDAIPP…DRPFQGEDVE (67 aa). Residues 146 to 185 adopt a coiled-coil conformation; the sequence is EKQEKEGVIQNFKRTLSKKEKKEKKKREKEALRQASDKDD. Positions 160–172 are enriched in basic residues; the sequence is TLSKKEKKEKKKR. A compositionally biased stretch (basic and acidic residues) spans 173 to 189; it reads EKEALRQASDKDDRPFQ. Phosphoserine is present on residues S216, S246, and S256. The 103-residue stretch at 246 to 348 folds into the Ras-associating 2 domain; that stretch reads SGGTLRIYAD…LVFQLKRRPP (103 aa). Over residues 349–371 the composition is skewed to basic and acidic residues; that stretch reads DHIPKKTKKHLEGKTPKGKERAD. Residues 349-378 are disordered; it reads DHIPKKTKKHLEGKTPKGKERADGSGYGST. S391 and S424 each carry phosphoserine. One can recognise an FHA domain in the interval 426–492; it reads TEVGTEKLDD…LQSGMKVQFG (67 aa). Residues S512, S557, S562, S589, and S655 each carry the phosphoserine modification. The segment at 534–595 is disordered; sequence FDLGGDIHSG…RQESRTQDAS (62 aa). Over residues 580–591 the composition is skewed to basic and acidic residues; that stretch reads QQPDYRRQESRT. The Dilute domain occupies 668–908; sequence NKMVSMMEGV…IENVVTVAEN (241 aa). The 87-residue stretch at 1007 to 1093 folds into the PDZ domain; the sequence is IITVTLKKQN…VVTLEVAKQG (87 aa). A phosphoserine mark is found at S1083, S1107, S1126, S1140, S1143, S1172, S1173, S1182, and S1199. Residues 1107-1223 form a disordered region; sequence SPMMQRISDR…PRPEAYPIPT (117 aa). The segment covering 1113-1128 has biased composition (basic and acidic residues); it reads ISDRRGSGKPRPKSEG. The span at 1132–1143 shows a compositional bias: polar residues; it reads YNNSTQNGSPES. Basic and acidic residues predominate over residues 1152 to 1172; it reads SEPKKLPGDDRLMKNRADHRS. Polar residues predominate over residues 1190–1210; the sequence is ASGTTAKITSVSTGNLCTEEQ. Residues T1211 and T1232 each carry the phosphothreonine modification. Disordered stretches follow at residues 1235–1473, 1501–1528, and 1569–1824; these read ASKS…LQRP, SKEE…EKQQ, and RLQE…LNTK. S1238 is modified (phosphoserine). 2 stretches are compositionally biased toward basic and acidic residues: residues 1252–1262 and 1274–1302; these read YEEKPHMHTDS and RSQE…KSDS. Residue S1275 is modified to Phosphoserine. Low complexity predominate over residues 1309–1318; sequence SSSLDSSTSS. The segment covering 1325–1337 has biased composition (polar residues); the sequence is SSKSVTPASTLTK. S1328 is modified (phosphoserine). T1330 bears the Phosphothreonine mark. Low complexity predominate over residues 1345-1356; sequence TPAAIPATPVAV. Residues 1364–1373 show a composition bias toward pro residues; the sequence is LPPPPPPPPV. The segment covering 1407 to 1441 has biased composition (basic and acidic residues); that stretch reads AERRKREEHQRWYEKEKARLEEERERKRREQERKL. Positions 1408-1448 form a coiled coil; that stretch reads ERRKREEHQRWYEKEKARLEEERERKRREQERKLGQMRTQS. Residues S1501 and S1512 each carry the phosphoserine modification. Positions 1515-1528 are enriched in basic and acidic residues; it reads PWKRDAKEKLEKQQ. Residues 1523–1667 are a coiled coil; the sequence is KLEKQQQMHI…SRLEAERRRQ (145 aa). The span at 1578-1589 shows a compositional bias: acidic residues; sequence EDDEEEEDDDVD. The span at 1597–1677 shows a compositional bias: basic and acidic residues; sequence LEAERRARLQ…HDEAARRLLE (81 aa). Positions 1694-1709 are enriched in pro residues; that stretch reads PPSPSPAPGAPPPPPQ. Phosphoserine is present on residues S1696, S1721, S1774, S1779, and S1799. Positions 1762 to 1776 are enriched in basic and acidic residues; the sequence is DACRDAKEKRSKSQD. K1807 is subject to N6-acetyllysine. Residues 1813-1824 are compositionally biased toward basic and acidic residues; that stretch reads KLTELENELNTK.

Homodimer. Interacts with F-actin, nectin and NECTIN3. Essential for the association of nectin and E-cadherin. Isoform 1/s-afadin does not interact with F-actin. Interacts with ZO-1 and occludin, but probably in an indirect manner. Interacts with RIT1 and RIT2. Interacts with NRXN1 and BCR. Interacts with ADAM10; the interaction locks ADAM10 at adherens junctions following ADAM10 recruitment to adherens junctions by TSPAN33.

Its subcellular location is the cell junction. It is found in the adherens junction. Functionally, belongs to an adhesion system, probably together with the E-cadherin-catenin system, which plays a role in the organization of homotypic, interneuronal and heterotypic cell-cell adherens junctions (AJs). Nectin- and actin-filament-binding protein that connects nectin to the actin cytoskeleton. May play a key role in the organization of epithelial structures of the embryonic ectoderm. Essential for the organization of adherens junctions. This is Afadin from Homo sapiens (Human).